A 229-amino-acid polypeptide reads, in one-letter code: Ribonuclease 3 (229 aa).

An RNase III domain is found at 5 to 127 (LSRLERQLGY…LIGAIYLDAG (123 aa)). Glutamate 40 contributes to the Mg(2+) binding site. Residue aspartate 44 is part of the active site. Positions 113 and 116 each coordinate Mg(2+). Glutamate 116 is a catalytic residue. A DRBM domain is found at 154 to 224 (DPKTRLQEFL…AAAALIALGV (71 aa)).

Belongs to the ribonuclease III family. In terms of assembly, homodimer. Requires Mg(2+) as cofactor.

The protein localises to the cytoplasm. The enzyme catalyses Endonucleolytic cleavage to 5'-phosphomonoester.. Functionally, digests double-stranded RNA. Involved in the processing of primary rRNA transcript to yield the immediate precursors to the large and small rRNAs (23S and 16S). Processes some mRNAs, and tRNAs when they are encoded in the rRNA operon. Processes pre-crRNA and tracrRNA of type II CRISPR loci if present in the organism. The polypeptide is Ribonuclease 3 (Pseudomonas fluorescens (strain Pf0-1)).